The sequence spans 205 residues: LexA repressor (205 aa).

The segment at residues 29–49 (IRDICKATGLRSSSTVYNYLN) is a DNA-binding region (H-T-H motif). Active-site for autocatalytic cleavage activity residues include serine 128 and lysine 165.

Belongs to the peptidase S24 family. As to quaternary structure, homodimer.

It catalyses the reaction Hydrolysis of Ala-|-Gly bond in repressor LexA.. Functionally, represses a number of genes involved in the response to DNA damage (SOS response), including recA and lexA. In the presence of single-stranded DNA, RecA interacts with LexA causing an autocatalytic cleavage which disrupts the DNA-binding part of LexA, leading to derepression of the SOS regulon and eventually DNA repair. The sequence is that of LexA repressor from Moorella thermoacetica (strain ATCC 39073 / JCM 9320).